The sequence spans 397 residues: Formate-dependent phosphoribosylglycinamide formyltransferase (397 aa).

Residues 21 to 22 and Glu-81 each bind N(1)-(5-phospho-beta-D-ribosyl)glycinamide; that span reads EL. ATP is bound by residues Arg-113, Lys-154, 194 to 197, and Glu-202; that span reads EEYV. The region spanning 118-313 is the ATP-grasp domain; it reads KLAAEKVKVP…EFQIHVRSAL (196 aa). Positions 272 and 284 each coordinate Mg(2+). N(1)-(5-phospho-beta-D-ribosyl)glycinamide contacts are provided by residues Asp-291, Lys-361, and 368–369; that span reads RR.

The protein belongs to the PurK/PurT family. In terms of assembly, homodimer.

It carries out the reaction N(1)-(5-phospho-beta-D-ribosyl)glycinamide + formate + ATP = N(2)-formyl-N(1)-(5-phospho-beta-D-ribosyl)glycinamide + ADP + phosphate + H(+). It participates in purine metabolism; IMP biosynthesis via de novo pathway; N(2)-formyl-N(1)-(5-phospho-D-ribosyl)glycinamide from N(1)-(5-phospho-D-ribosyl)glycinamide (formate route): step 1/1. Its function is as follows. Involved in the de novo purine biosynthesis. Catalyzes the transfer of formate to 5-phospho-ribosyl-glycinamide (GAR), producing 5-phospho-ribosyl-N-formylglycinamide (FGAR). Formate is provided by PurU via hydrolysis of 10-formyl-tetrahydrofolate. In Sulfurisphaera tokodaii (strain DSM 16993 / JCM 10545 / NBRC 100140 / 7) (Sulfolobus tokodaii), this protein is Formate-dependent phosphoribosylglycinamide formyltransferase.